Reading from the N-terminus, the 211-residue chain is Large ribosomal subunit protein uL4 (211 aa).

The interval 44-94 is disordered; that stretch reads RSGNHATKTRSEVRGGGKKPWSQKGTGHARQGSTRAPHWVGGGTVHGPQKR.

Belongs to the universal ribosomal protein uL4 family. As to quaternary structure, part of the 50S ribosomal subunit.

Functionally, one of the primary rRNA binding proteins, this protein initially binds near the 5'-end of the 23S rRNA. It is important during the early stages of 50S assembly. It makes multiple contacts with different domains of the 23S rRNA in the assembled 50S subunit and ribosome. Its function is as follows. Forms part of the polypeptide exit tunnel. The polypeptide is Large ribosomal subunit protein uL4 (Leptospira borgpetersenii serovar Hardjo-bovis (strain JB197)).